The sequence spans 157 residues: Probable succinate transporter subunit YjjB (157 aa).

Helical transmembrane passes span 6–26, 55–75, 87–107, and 129–149; these read FFMALMQDMILSAIPAVGFAM, AGFNIEWSTFMASLLVGSIGI, VFTVAAVIPMFPGISAYTAMI, and FLKASSIVGALSIGLSVPGLW.

It belongs to the ThrE exporter (TC 2.A.79) family. The transporter is composed of YjjB and YjjP.

The protein localises to the cell inner membrane. In terms of biological role, involved in succinate export with YjjP. Both proteins are required for export. This chain is Probable succinate transporter subunit YjjB, found in Salmonella arizonae (strain ATCC BAA-731 / CDC346-86 / RSK2980).